Here is a 269-residue protein sequence, read N- to C-terminus: Formamidopyrimidine-DNA glycosylase (269 aa).

The active-site Schiff-base intermediate with DNA is P2. The active-site Proton donor is E3. K57 serves as the catalytic Proton donor; for beta-elimination activity. H90, R109, and K150 together coordinate DNA. The FPG-type zinc finger occupies 235-269 (RVYGRNGEPCRTCGTPIETAKHGQRSTFFCRRCQK). The active-site Proton donor; for delta-elimination activity is the R259.

It belongs to the FPG family. Monomer. The cofactor is Zn(2+).

The catalysed reaction is Hydrolysis of DNA containing ring-opened 7-methylguanine residues, releasing 2,6-diamino-4-hydroxy-5-(N-methyl)formamidopyrimidine.. It carries out the reaction 2'-deoxyribonucleotide-(2'-deoxyribose 5'-phosphate)-2'-deoxyribonucleotide-DNA = a 3'-end 2'-deoxyribonucleotide-(2,3-dehydro-2,3-deoxyribose 5'-phosphate)-DNA + a 5'-end 5'-phospho-2'-deoxyribonucleoside-DNA + H(+). Involved in base excision repair of DNA damaged by oxidation or by mutagenic agents. Acts as a DNA glycosylase that recognizes and removes damaged bases. Has a preference for oxidized purines, such as 7,8-dihydro-8-oxoguanine (8-oxoG). Has AP (apurinic/apyrimidinic) lyase activity and introduces nicks in the DNA strand. Cleaves the DNA backbone by beta-delta elimination to generate a single-strand break at the site of the removed base with both 3'- and 5'-phosphates. This Pectobacterium carotovorum subsp. carotovorum (strain PC1) protein is Formamidopyrimidine-DNA glycosylase.